A 417-amino-acid chain; its full sequence is MRLTPLLVALFGYIYCQETFVGDQVLEVIPNDEEQIKTLLQLEAEEHLELDFWKSPSVPRQTVHVRVPFASIQDVKVFLESQGITYSIMIEDVQVLLDQEREEMLFNQQRERGTNFNFGAYHTLEEIYQEMDNLVAENPGLVSKVNIGSSFENRPMNVLKFSTGGDKPAIWLDAGIHAREWVTQATALWTANKIASDYGTDPAITSLLNTLDVFLLPVTNPDGYVFSQTSNRMWRKTRSKRSGSFCVGVDPNRNWDANFGGPGASSNPCSDSYHGPSPNSEVEVKSIVDFIKSHGKVKAFITLHSYSQLLMFPYGYKCAKPDDFNELDEVAQRAAQSLKRLHGTSYKVGPICSVIYQASGGSIDWAYDLGIKYSFAFELRDTGYYGFLLPAKQILPTAEETWLGLKTIMEHVRDHPY.

Residues 1-16 form the signal peptide; the sequence is MRLTPLLVALFGYIYC. A propeptide spans 17–112 (activation peptide); that stretch reads QETFVGDQVL…EMLFNQQRER (96 aa). A Peptidase M14 domain is found at 120 to 412; sequence AYHTLEEIYQ…LGLKTIMEHV (293 aa). Zn(2+) is bound by residues His177 and Glu180. Substrate contacts are provided by residues 177–180, Arg235, and 252–253; these read HARE and NR. Cys246 and Cys269 form a disulfide bridge. His304 provides a ligand contact to Zn(2+). A substrate-binding site is contributed by 305–306; the sequence is SY. Cys318 and Cys352 are disulfide-bonded. Residue Tyr356 participates in substrate binding. The Proton donor/acceptor role is filled by Glu378.

This sequence belongs to the peptidase M14 family. It depends on Zn(2+) as a cofactor.

The protein resides in the secreted. It catalyses the reaction Similar to that of carboxypeptidase A (EC 3.4.17.1), but with a preference for bulkier C-terminal residues.. Functionally, carboxypeptidase that catalyzes the release of a C-terminal amino acid, with a preference for large aromatic C-terminal residues. The protein is Carboxypeptidase A2 (Cpa2) of Mus musculus (Mouse).